The following is a 167-amino-acid chain: Claudin domain-containing protein 2 (167 aa).

4 consecutive transmembrane segments (helical) span residues 7–27 (LQSG…LSTA), 59–79 (LAVT…GMVM), 96–116 (TSAF…GYTV), and 134–154 (WLAL…DMIM).

The protein belongs to the PMP-22/EMP/MP20 family.

It is found in the membrane. The polypeptide is Claudin domain-containing protein 2 (CLDND2) (Homo sapiens (Human)).